The primary structure comprises 146 residues: Large ribosomal subunit protein uL15 (146 aa).

A disordered region spans residues 1–65; that stretch reads MSDIQLNTLK…GQMPLQRRLP (65 aa). Residues 24-34 are compositionally biased toward gly residues; the sequence is RGIGSGLGKTA.

This sequence belongs to the universal ribosomal protein uL15 family. In terms of assembly, part of the 50S ribosomal subunit.

In terms of biological role, binds to the 23S rRNA. This Bordetella parapertussis (strain 12822 / ATCC BAA-587 / NCTC 13253) protein is Large ribosomal subunit protein uL15.